A 238-amino-acid chain; its full sequence is Riboflavin synthase (238 aa).

Lumazine-binding repeat units lie at residues 1-103 (MFTG…FGGH) and 104-205 (YVQG…EKQI). Residues 4 to 6 (GIV), 54 to 56 (CLT), and 68 to 73 (GISPET) contribute to the 2,4-dihydroxypteridine site. Phosphoserine is present on Ser95. Residues 107–109 (GHV), Lys143, 152–154 (SLT), and 170–175 (SMIKHT) each bind 2,4-dihydroxypteridine.

Homotrimer.

It catalyses the reaction 2 6,7-dimethyl-8-(1-D-ribityl)lumazine + H(+) = 5-amino-6-(D-ribitylamino)uracil + riboflavin. The protein operates within cofactor biosynthesis; riboflavin biosynthesis; riboflavin from 2-hydroxy-3-oxobutyl phosphate and 5-amino-6-(D-ribitylamino)uracil: step 2/2. Catalyzes the dismutation of two molecules of 6,7-dimethyl-8-ribityllumazine, resulting in the formation of riboflavin and 5-amino-6-(D-ribitylamino)uracil. This Saccharomyces cerevisiae (strain ATCC 204508 / S288c) (Baker's yeast) protein is Riboflavin synthase.